We begin with the raw amino-acid sequence, 250 residues long: MNMPLISIIMPVYNAECYLNQGILSCLNQSYQNIELILIDDGSTDKSIEIINNIIDKDKRVKLFFTPTNQGPAAARNIGLEKAQGDYITFLDSDDFIANDKLEKQLNFMLQNHLVMTHGNYAFCDLEGNQIKLVTTSKKIDYLTLLQGNQFKIMTVLVERESIKLLRFPNIKHEDYAFFLDCLKEVKQSILYSHQASSFVRIGKVSVSSNKFKSAIWTFNIYFKREKLGVVKSIYYFILYAYNGFIKYKK.

It belongs to the glycosyltransferase 2 family.

This is an uncharacterized protein from Haemophilus influenzae (strain ATCC 51907 / DSM 11121 / KW20 / Rd).